A 398-amino-acid polypeptide reads, in one-letter code: Stearoyl-[acyl-carrier-protein] 9-desaturase, chloroplastic (398 aa).

The transit peptide at 1–34 (MALKLNPLASQPYNFPSSARPPISTFRSPKFLCL) directs the protein to the chloroplast. Fe cation-binding residues include Glu-140, Glu-178, His-181, Glu-231, Glu-264, and His-267.

Belongs to the fatty acid desaturase type 2 family. Homodimer. The cofactor is Fe(2+).

The protein localises to the plastid. Its subcellular location is the chloroplast. It carries out the reaction octadecanoyl-[ACP] + 2 reduced [2Fe-2S]-[ferredoxin] + O2 + 2 H(+) = (9Z)-octadecenoyl-[ACP] + 2 oxidized [2Fe-2S]-[ferredoxin] + 2 H2O. The protein operates within lipid metabolism; fatty acid metabolism. Its function is as follows. Converts stearoyl-ACP to oleoyl-ACP by introduction of a cis double bond between carbons 9 and 10 of the acyl chain. This chain is Stearoyl-[acyl-carrier-protein] 9-desaturase, chloroplastic, found in Brassica napus (Rape).